The primary structure comprises 632 residues: Chaperone protein HtpG (632 aa).

An a; substrate-binding region spans residues 1-339 (MAHETMSFQA…SADLPLNVSR (339 aa)). The segment at 340 to 559 (EILQESRDVK…DNDMSGYLQR (220 aa)) is b. Positions 560-632 (MLKAAGQNAP…TNALLLSRAA (73 aa)) are c.

This sequence belongs to the heat shock protein 90 family. Homodimer.

The protein localises to the cytoplasm. In terms of biological role, molecular chaperone. Has ATPase activity. This chain is Chaperone protein HtpG, found in Burkholderia lata (strain ATCC 17760 / DSM 23089 / LMG 22485 / NCIMB 9086 / R18194 / 383).